Reading from the N-terminus, the 361-residue chain is Chitinase-3-like protein 1 (361 aa).

A GH18 domain is found at Tyr-1–Val-361. Residues Cys-5 and Cys-30 are joined by a disulfide bond. N-linked (GlcNAc...) asparagine glycosylation occurs at Asn-39. Chitin-binding positions include Glu-49–Trp-50, Gly-76–Asn-79, Tyr-120, Leu-183–Asp-186, and Arg-241. Cys-278 and Cys-342 form a disulfide bridge. Residues Gln-302–Ala-316 form an important for AKT1 activation and IL8 production region. Trp-330 provides a ligand contact to chitin. Asn-345 is a glycosylation site (N-linked (GlcNAc...) asparagine).

The protein belongs to the glycosyl hydrolase 18 family. As to quaternary structure, monomer. In terms of tissue distribution, detected in mammary gland.

It localises to the secreted. The protein localises to the extracellular space. Its subcellular location is the cytoplasm. The protein resides in the perinuclear region. It is found in the endoplasmic reticulum. Functionally, carbohydrate-binding lectin with a preference for chitin. Has no chitinase activity. May play a role in tissue remodeling and in the capacity of cells to respond to and cope with changes in their environment. Plays a role in T-helper cell type 2 (Th2) inflammatory response and IL-13-induced inflammation, regulating allergen sensitization, inflammatory cell apoptosis, dendritic cell accumulation and M2 macrophage differentiation. Facilitates invasion of pathogenic enteric bacteria into colonic mucosa and lymphoid organs. Mediates activation of AKT1 signaling pathway and subsequent IL8 production in colonic epithelial cells. Regulates antibacterial responses in lung by contributing to macrophage bacterial killing, controlling bacterial dissemination and augmenting host tolerance. Also regulates hyperoxia-induced injury, inflammation and epithelial apoptosis in lung. This is Chitinase-3-like protein 1 (CHI3L1) from Ovis aries (Sheep).